The chain runs to 196 residues: Glycerol-3-phosphate acyltransferase (196 aa).

5 consecutive transmembrane segments (helical) span residues 1-21, 55-75, 81-101, 118-138, and 140-160; these read MIIF…SISG, IAIF…WLGT, PIYL…PIYF, AISI…VYLF, and YASL…WYIQ.

The protein belongs to the PlsY family. In terms of assembly, probably interacts with PlsX.

Its subcellular location is the cell inner membrane. The enzyme catalyses an acyl phosphate + sn-glycerol 3-phosphate = a 1-acyl-sn-glycero-3-phosphate + phosphate. The protein operates within lipid metabolism; phospholipid metabolism. Functionally, catalyzes the transfer of an acyl group from acyl-phosphate (acyl-PO(4)) to glycerol-3-phosphate (G3P) to form lysophosphatidic acid (LPA). This enzyme utilizes acyl-phosphate as fatty acyl donor, but not acyl-CoA or acyl-ACP. The chain is Glycerol-3-phosphate acyltransferase from Blochmanniella floridana.